Here is a 246-residue protein sequence, read N- to C-terminus: Ubiquinone biosynthesis O-methyltransferase (246 aa).

Residues R44, G63, D84, and M128 each coordinate S-adenosyl-L-methionine.

Belongs to the methyltransferase superfamily. UbiG/COQ3 family.

It catalyses the reaction a 3-demethylubiquinol + S-adenosyl-L-methionine = a ubiquinol + S-adenosyl-L-homocysteine + H(+). It carries out the reaction a 3-(all-trans-polyprenyl)benzene-1,2-diol + S-adenosyl-L-methionine = a 2-methoxy-6-(all-trans-polyprenyl)phenol + S-adenosyl-L-homocysteine + H(+). The protein operates within cofactor biosynthesis; ubiquinone biosynthesis. O-methyltransferase that catalyzes the 2 O-methylation steps in the ubiquinone biosynthetic pathway. This is Ubiquinone biosynthesis O-methyltransferase from Xylella fastidiosa (strain 9a5c).